A 60-amino-acid polypeptide reads, in one-letter code: Large ribosomal subunit protein bL32 (60 aa).

A compositionally biased stretch (basic residues) spans 1 to 16 (MPNPKRRHSKKRTSTR). Positions 1–28 (MPNPKRRHSKKRTSTRRAHDALKQPGLS) are disordered.

The protein belongs to the bacterial ribosomal protein bL32 family.

This is Large ribosomal subunit protein bL32 from Solibacter usitatus (strain Ellin6076).